The primary structure comprises 238 residues: Orotidine 5'-phosphate decarboxylase (238 aa).

Substrate-binding positions include D18, K40, 67–76 (DMKLLDIDNT), T122, R183, Q192, and R213. K69 acts as the Proton donor in catalysis.

This sequence belongs to the OMP decarboxylase family. Type 1 subfamily. Homodimer.

The enzyme catalyses orotidine 5'-phosphate + H(+) = UMP + CO2. The protein operates within pyrimidine metabolism; UMP biosynthesis via de novo pathway; UMP from orotate: step 2/2. In terms of biological role, catalyzes the decarboxylation of orotidine 5'-monophosphate (OMP) to uridine 5'-monophosphate (UMP). This Brucella canis (strain ATCC 23365 / NCTC 10854 / RM-666) protein is Orotidine 5'-phosphate decarboxylase.